A 445-amino-acid polypeptide reads, in one-letter code: Protein kinase C and casein kinase substrate in neurons protein 1 (445 aa).

The region spanning 12-282 is the F-BAR domain; sequence DETTDSFWEV…TIVSASAQED (271 aa). 2 coiled-coil regions span residues 146–167 and 183–219; these read AKKL…KEEK and TTDQ…NKCT. The tract at residues 327-390 is disordered; it reads LTQVTHGAEH…PFEEDSKGVR (64 aa). Polar residues-rich tracts occupy residues 338–358 and 368–379; these read TPQT…QYSA and TAAQSASETNGG. In terms of domain architecture, SH3 spans 386–445; sequence SKGVRVRALYDYEGQEQDELTFKAGDELTKLEDEDEQGWCKGRLDSGQLGLYPANYVEPV.

Interacts with cobl.

It localises to the cytoplasm. It is found in the cytosol. Its subcellular location is the cell membrane. The protein localises to the cell projection. The protein resides in the synapse. It localises to the synaptosome. It is found in the cytoplasmic vesicle membrane. Its subcellular location is the ruffle membrane. The protein localises to the membrane. Functionally, binds to membranes via its F-BAR domain and mediates membrane tubulation. Plays a role in cellular transport processes by recruiting dynamins to membranes. Plays a role in the reorganization of the actin cytoskeleton and in neuron morphogenesis via its interaction with cobl, and by recruiting cobl to the cell cortex. Plays a role in the regulation of neurite formation, neurite branching and the regulation of neurite length. Required for normal synaptic vesicle endocytosis; this process retrieves previously released neurotransmitters to accommodate multiple cycles of neurotransmission. Required for normal excitatory and inhibitory synaptic transmission. Required for normal embryonic development, including normal development of laterality, normal body size and shape, as well as normal brain and heart development. Required for normal development of stereocilia and kinocilia in sensory hair cells of neuromasts in the posterior lateral line organ, and thus also for balance keeping and normal swimming behavior. This chain is Protein kinase C and casein kinase substrate in neurons protein 1 (pacsin1b), found in Danio rerio (Zebrafish).